The sequence spans 569 residues: Cysteine--tRNA ligase CPS1 homolog, chloroplastic/mitochondrial (569 aa).

The N-terminal 42 residues, 1–42 (MAAARRAAGLLPLLLSSPSRARLPHRQALALTPPLLRPHRLY), are a transit peptide targeting the chloroplast and mitochondrion. Zn(2+) is bound at residue cysteine 99. The 'HIGH' region motif lies at 101–111 (VTPYDDSHIGH). 3 residues coordinate Zn(2+): cysteine 279, histidine 304, and glutamate 308. The 'KMSKS' region motif lies at 336-340 (KMSKS). Lysine 339 is a binding site for ATP.

The protein belongs to the class-I aminoacyl-tRNA synthetase family. Requires Zn(2+) as cofactor.

It is found in the plastid. The protein localises to the chloroplast. It localises to the mitochondrion. The enzyme catalyses tRNA(Cys) + L-cysteine + ATP = L-cysteinyl-tRNA(Cys) + AMP + diphosphate. Functionally, nuclear genome-encoded factor required for normal assembly of chloroplast polysomes. In Oryza sativa subsp. japonica (Rice), this protein is Cysteine--tRNA ligase CPS1 homolog, chloroplastic/mitochondrial.